We begin with the raw amino-acid sequence, 340 residues long: 4-dimethylallyltryptophan N-methyltransferase easF (340 aa).

This sequence belongs to the methyltransferase superfamily. Homodimer.

It catalyses the reaction 4-(3-methylbut-2-enyl)-L-tryptophan + S-adenosyl-L-methionine = 4-(3-methylbut-2-enyl)-L-abrine + S-adenosyl-L-homocysteine + H(+). It functions in the pathway alkaloid biosynthesis; ergot alkaloid biosynthesis. Its function is as follows. 4-dimethylallyltryptophan N-methyltransferase; part of the gene cluster that mediates the biosynthesis of fungal ergot alkaloid. DmaW catalyzes the first step of ergot alkaloid biosynthesis by condensing dimethylallyl diphosphate (DMAP) and tryptophan to form 4-dimethylallyl-L-tryptophan. The second step is catalyzed by the methyltransferase easF that methylates 4-dimethylallyl-L-tryptophan in the presence of S-adenosyl-L-methionine, resulting in the formation of 4-dimethylallyl-L-abrine. The catalase easC and the FAD-dependent oxidoreductase easE then transform 4-dimethylallyl-L-abrine to chanoclavine-I which is further oxidized by easD in the presence of NAD(+), resulting in the formation of chanoclavine-I aldehyde. Chanoclavine-I aldehyde is the precursor of ergoamides and ergopeptines in Clavicipitaceae, and clavine-type alcaloids such as fumiclavine in Trichocomaceae. However, the metabolites downstream of chanoclavine-I aldehyde in Arthrodermataceae have not been identified yet. The sequence is that of 4-dimethylallyltryptophan N-methyltransferase easF from Trichophyton verrucosum (strain HKI 0517).